The chain runs to 261 residues: Guanine nucleotide exchange factor BopE (261 aa).

Belongs to the GEF (guanine exchange factor) SopE family. Monomer. Interacts with human CDC42.

The protein resides in the secreted. Its function is as follows. Activator for both CDC42 and RAC1 by directly interacting with these Rho GTPases and acting as a guanine nucleotide exchange factor (GEF). This activation results in actin cytoskeleton rearrangements and stimulates membrane ruffling, thus promoting bacterial entry into non-phagocytic cells. The chain is Guanine nucleotide exchange factor BopE (bopE) from Burkholderia pseudomallei (strain 1710b).